Here is a 127-residue protein sequence, read N- to C-terminus: Large ribosomal subunit protein bL12 (127 aa).

It belongs to the bacterial ribosomal protein bL12 family. In terms of assembly, homodimer. Part of the ribosomal stalk of the 50S ribosomal subunit. Forms a multimeric L10(L12)X complex, where L10 forms an elongated spine to which 2 to 4 L12 dimers bind in a sequential fashion. Binds GTP-bound translation factors.

Functionally, forms part of the ribosomal stalk which helps the ribosome interact with GTP-bound translation factors. Is thus essential for accurate translation. In Carboxydothermus hydrogenoformans (strain ATCC BAA-161 / DSM 6008 / Z-2901), this protein is Large ribosomal subunit protein bL12.